A 338-amino-acid chain; its full sequence is Phenylalanine--tRNA ligase alpha subunit (338 aa).

Glu252 contributes to the Mg(2+) binding site.

It belongs to the class-II aminoacyl-tRNA synthetase family. Phe-tRNA synthetase alpha subunit type 1 subfamily. As to quaternary structure, tetramer of two alpha and two beta subunits. It depends on Mg(2+) as a cofactor.

Its subcellular location is the cytoplasm. It catalyses the reaction tRNA(Phe) + L-phenylalanine + ATP = L-phenylalanyl-tRNA(Phe) + AMP + diphosphate + H(+). The polypeptide is Phenylalanine--tRNA ligase alpha subunit (Pseudomonas entomophila (strain L48)).